An 876-amino-acid chain; its full sequence is Beta-glucosidase 1 (876 aa).

The signal sequence occupies residues 1–17; that stretch reads MLMIVQLLVFALGLAVA. N-linked (GlcNAc...) asparagine glycans are attached at residues asparagine 22, asparagine 75, asparagine 224, and asparagine 267. Aspartate 295 is an active-site residue. 10 N-linked (GlcNAc...) asparagine glycosylation sites follow: asparagine 332, asparagine 339, asparagine 372, asparagine 389, asparagine 426, asparagine 544, asparagine 585, asparagine 739, asparagine 780, and asparagine 790.

The protein belongs to the glycosyl hydrolase 3 family.

The catalysed reaction is Hydrolysis of terminal, non-reducing beta-D-glucosyl residues with release of beta-D-glucose.. Its pathway is glycan metabolism; cellulose degradation. The sequence is that of Beta-glucosidase 1 (BGL1) from Saccharomycopsis fibuligera (Yeast).